The following is a 245-amino-acid chain: Eukaryotic translation initiation factor 6 (245 aa).

Position 113 is a phosphotyrosine (tyrosine 113). The residue at position 165 (threonine 165) is a Phosphothreonine. Serine 166 is subject to Phosphoserine. Phosphoserine; by CK1 is present on residues serine 174 and serine 175. Serine 235 is modified (phosphoserine; by PKC). 2 positions are modified to phosphoserine: serine 239 and serine 243.

Belongs to the eIF-6 family. Monomer. Associates with the 60S ribosomal subunit. Interacts with RACK1. Interacts with DICER1, AGO2, TARBP2, MOV10 and RPL7A; they form a large RNA-induced silencing complex (RISC). In terms of processing, phosphorylation at Ser-174 and Ser-175 by CSNK1D/CK1 promotes nuclear export. Post-translationally, ufmylated by UFL1. As to expression, expressed at very high levels in colon carcinoma with lower levels in normal colon and ileum and lowest levels in kidney and muscle (at protein level).

The protein localises to the cytoplasm. The protein resides in the nucleus. It is found in the nucleolus. Functionally, binds to the 60S ribosomal subunit and prevents its association with the 40S ribosomal subunit to form the 80S initiation complex in the cytoplasm. Behaves as a stimulatory translation initiation factor downstream insulin/growth factors. Is also involved in ribosome biogenesis. Associates with pre-60S subunits in the nucleus and is involved in its nuclear export. Cytoplasmic release of TIF6 from 60S subunits and nuclear relocalization is promoted by a RACK1 (RACK1)-dependent protein kinase C activity. In tissues responsive to insulin, controls fatty acid synthesis and glycolysis by exerting translational control of adipogenic transcription factors such as CEBPB, CEBPD and ATF4 that have G/C rich or uORF in their 5'UTR. Required for ROS-dependent megakaryocyte maturation and platelets formation, controls the expression of mitochondrial respiratory chain genes involved in reactive oxygen species (ROS) synthesis. Involved in miRNA-mediated gene silencing by the RNA-induced silencing complex (RISC). Required for both miRNA-mediated translational repression and miRNA-mediated cleavage of complementary mRNAs by RISC. Modulates cell cycle progression and global translation of pre-B cells, its activation seems to be rate-limiting in tumorigenesis and tumor growth. The chain is Eukaryotic translation initiation factor 6 from Homo sapiens (Human).